The chain runs to 103 residues: Acyl-CoA-binding protein (103 aa).

One can recognise an ACB domain in the interval H18 to I103. An acyl-CoA contacts are provided by residues K30, Y45–K49, K67, K71, and Y90.

The protein belongs to the ACBP family. In terms of assembly, monomer.

The protein resides in the endoplasmic reticulum. It is found in the golgi apparatus. In terms of biological role, binds medium- and long-chain acyl-CoA esters with very high affinity and may function as an intracellular carrier of acyl-CoA esters. It is also able to displace diazepam from the benzodiazepine (BZD) recognition site located on the GABA type A receptor. It is therefore possible that this protein also acts as a neuropeptide to modulate the action of the GABA receptor. The chain is Acyl-CoA-binding protein (DBI) from Anas platyrhynchos (Mallard).